The primary structure comprises 227 residues: Cytochrome c oxidase subunit 2 (227 aa).

Residues Met1–Ser14 are Mitochondrial intermembrane-facing. The chain crosses the membrane as a helical span at residues Pro15–Thr45. The Mitochondrial matrix portion of the chain corresponds to Leu46 to Gln59. A helical membrane pass occupies residues Glu60–Thr87. The Mitochondrial intermembrane portion of the chain corresponds to Asp88–Leu227. Cu cation is bound by residues His161, Cys196, Glu198, Cys200, His204, and Met207. Glu198 provides a ligand contact to Mg(2+).

The protein belongs to the cytochrome c oxidase subunit 2 family. As to quaternary structure, component of the cytochrome c oxidase (complex IV, CIV), a multisubunit enzyme composed of 14 subunits. The complex is composed of a catalytic core of 3 subunits MT-CO1, MT-CO2 and MT-CO3, encoded in the mitochondrial DNA, and 11 supernumerary subunits COX4I1 (or COX4I2), COX5A, COX5B, COX6A1 (or COX6A2), COX6B1 (or COX6B2), COX6C, COX7A2 (or COX7A1), COX7B, COX7C, COX8A and NDUFA4, which are encoded in the nuclear genome. The complex exists as a monomer or a dimer and forms supercomplexes (SCs) in the inner mitochondrial membrane with NADH-ubiquinone oxidoreductase (complex I, CI) and ubiquinol-cytochrome c oxidoreductase (cytochrome b-c1 complex, complex III, CIII), resulting in different assemblies (supercomplex SCI(1)III(2)IV(1) and megacomplex MCI(2)III(2)IV(2)). Found in a complex with TMEM177, COA6, COX18, COX20, SCO1 and SCO2. Interacts with TMEM177 in a COX20-dependent manner. Interacts with COX20. Interacts with COX16. The cofactor is Cu cation.

The protein resides in the mitochondrion inner membrane. It carries out the reaction 4 Fe(II)-[cytochrome c] + O2 + 8 H(+)(in) = 4 Fe(III)-[cytochrome c] + 2 H2O + 4 H(+)(out). In terms of biological role, component of the cytochrome c oxidase, the last enzyme in the mitochondrial electron transport chain which drives oxidative phosphorylation. The respiratory chain contains 3 multisubunit complexes succinate dehydrogenase (complex II, CII), ubiquinol-cytochrome c oxidoreductase (cytochrome b-c1 complex, complex III, CIII) and cytochrome c oxidase (complex IV, CIV), that cooperate to transfer electrons derived from NADH and succinate to molecular oxygen, creating an electrochemical gradient over the inner membrane that drives transmembrane transport and the ATP synthase. Cytochrome c oxidase is the component of the respiratory chain that catalyzes the reduction of oxygen to water. Electrons originating from reduced cytochrome c in the intermembrane space (IMS) are transferred via the dinuclear copper A center (CU(A)) of subunit 2 and heme A of subunit 1 to the active site in subunit 1, a binuclear center (BNC) formed by heme A3 and copper B (CU(B)). The BNC reduces molecular oxygen to 2 water molecules using 4 electrons from cytochrome c in the IMS and 4 protons from the mitochondrial matrix. The protein is Cytochrome c oxidase subunit 2 (MT-CO2) of Homo sapiens (Human).